Here is a 1107-residue protein sequence, read N- to C-terminus: Copine family protein 1 (1107 aa).

Residues 1–22 lie on the Extracellular side of the membrane; that stretch reads MVFDARLGYDPDEWEECPEPEH. The chain crosses the membrane as a helical span at residues 23–45; it reads FLVFSGFTRYMLTFAAIAFVYYF. The Cytoplasmic segment spans residues 46-1107; that stretch reads FKLLDDKNKK…IRREMMHNPL (1062 aa). Residues 67-124 are a coiled coil; the sequence is VESVLAKAGDKLHDVKEQVQQHIPESAEELMREADQYLKEQAHSVQNNVHQFAEQAAN. Residues 478 to 488 show a composition bias toward low complexity; it reads QLQQNQQQHQQ. Disordered regions lie at residues 478 to 501 and 673 to 698; these read QLQQ…TADS and HEPE…SRQV. A compositionally biased stretch (basic and acidic residues) spans 492-501; the sequence is IDRRRTTADS. Residues 687–698 are compositionally biased toward polar residues; that stretch reads KNPSFEATSRQV. Positions 863-1023 constitute a VWFA domain; sequence NLIFGIDYTA…LSIIVVGVGD (161 aa).

It belongs to the copine family. May interact (via VWFA domain) with unc-89 (via Ig-like C2-type 1-3) and unc-96 (via C-terminus); cpna-1 binding sites for unc-89 and unc-96 are different. May interact with pat-6. May interact with lim-9 (via LIM domains) and with scpl-1 (via FCP1 homology domain). In terms of tissue distribution, expressed in body wall muscles (at protein level).

It is found in the basal cell membrane. The protein resides in the cytoplasm. It localises to the myofibril. Its subcellular location is the sarcomere. The protein localises to the m line. Involved in the assembly of dense bodies and M lines during body wall muscle development. Acts by recruiting downstream of integrin-associated protein pat-6/actopaxin several dense bodies and M line components including unc-89, lim-9, scpl-1 and unc-96 to integrin-mediated attachment sites. In Caenorhabditis elegans, this protein is Copine family protein 1.